The following is a 570-amino-acid chain: Protein NRT1/ PTR FAMILY 8.2 (570 aa).

Thr-99 carries the phosphothreonine modification. 10 consecutive transmembrane segments (helical) span residues 100–120 (IASFVVIYIAGMTLLTISASV), 136–156 (AGQTAITFIALYLIALGTGGI), 182–202 (FFNWFYFVINVGAMIASSVLV), 210–230 (WGWGLGVPTVAMAIAVVFFFA), 335–355 (IWATGIVFASVYSQMGTVFVL), 370–390 (IPSASLSLFDTLSVLFWAPVY), 414–434 (IGIGLVISIFSMVSAGILEVA), 454–474 (IFWQVPQYFLVGCAEVFTFIG), 493–513 (ALSLTAIAFGNYLSTFLVTLV), and 537–557 (YFFWLLAGLSFLNFLVYLWIA).

The protein belongs to the major facilitator superfamily. Proton-dependent oligopeptide transporter (POT/PTR) (TC 2.A.17) family. In terms of tissue distribution, expressed in developing and germinating pollen grains and ovules.

The protein localises to the cell membrane. In terms of biological role, peptide transporter. Mediates the transport of di- and tripeptides. High affinity transporter. Involved in the uptake of peptides during pollen germination and tube growth. This is Protein NRT1/ PTR FAMILY 8.2 (NPF8.2) from Arabidopsis thaliana (Mouse-ear cress).